A 201-amino-acid polypeptide reads, in one-letter code: Holliday junction branch migration complex subunit RuvA (201 aa).

The interval 1–64 (MYEYIRGQFQ…EDFIGLYGFT (64 aa)) is domain I. The interval 65–143 (TREELEMFKL…PDELTSEEGQ (79 aa)) is domain II. Residues 144 to 152 (LIEGINDNS) form a flexible linker region. The domain III stretch occupies residues 153–201 (DYSFNINETLSALMALGYTEKEAQKALEKVDKTLSIENMIKESLKLLMR).

Belongs to the RuvA family. Homotetramer. Forms an RuvA(8)-RuvB(12)-Holliday junction (HJ) complex. HJ DNA is sandwiched between 2 RuvA tetramers; dsDNA enters through RuvA and exits via RuvB. An RuvB hexamer assembles on each DNA strand where it exits the tetramer. Each RuvB hexamer is contacted by two RuvA subunits (via domain III) on 2 adjacent RuvB subunits; this complex drives branch migration. In the full resolvosome a probable DNA-RuvA(4)-RuvB(12)-RuvC(2) complex forms which resolves the HJ.

Its subcellular location is the cytoplasm. The RuvA-RuvB-RuvC complex processes Holliday junction (HJ) DNA during genetic recombination and DNA repair, while the RuvA-RuvB complex plays an important role in the rescue of blocked DNA replication forks via replication fork reversal (RFR). RuvA specifically binds to HJ cruciform DNA, conferring on it an open structure. The RuvB hexamer acts as an ATP-dependent pump, pulling dsDNA into and through the RuvAB complex. HJ branch migration allows RuvC to scan DNA until it finds its consensus sequence, where it cleaves and resolves the cruciform DNA. The chain is Holliday junction branch migration complex subunit RuvA from Clostridium perfringens (strain 13 / Type A).